The following is a 179-amino-acid chain: Large ribosomal subunit protein uL5 (179 aa).

The protein belongs to the universal ribosomal protein uL5 family. As to quaternary structure, part of the 50S ribosomal subunit; part of the 5S rRNA/L5/L18/L25 subcomplex. Contacts the 5S rRNA and the P site tRNA. Forms a bridge to the 30S subunit in the 70S ribosome.

In terms of biological role, this is one of the proteins that bind and probably mediate the attachment of the 5S RNA into the large ribosomal subunit, where it forms part of the central protuberance. In the 70S ribosome it contacts protein S13 of the 30S subunit (bridge B1b), connecting the 2 subunits; this bridge is implicated in subunit movement. Contacts the P site tRNA; the 5S rRNA and some of its associated proteins might help stabilize positioning of ribosome-bound tRNAs. This chain is Large ribosomal subunit protein uL5, found in Glaesserella parasuis serovar 5 (strain SH0165) (Haemophilus parasuis).